We begin with the raw amino-acid sequence, 366 residues long: Carboxy-cis,cis-muconate cyclase (366 aa).

Catalysis depends on residues His-149, Arg-197, Glu-213, and Arg-275.

Belongs to the cycloisomerase 2 family. Homotetramer.

The catalysed reaction is 3-carboxy-2,5-dihydro-5-oxofuran-2-acetate = 3-carboxy-cis,cis-muconate. The protein operates within aromatic compound metabolism; beta-ketoadipate pathway; 3-carboxy-cis,cis-muconate from 3-carboxy-2,5-dihydro-5-oxofuran-2-acetate: step 1/1. Functionally, catalyzes a syn cycloisomerization. Also possesses mle activity. This is Carboxy-cis,cis-muconate cyclase from Neurospora crassa (strain ATCC 24698 / 74-OR23-1A / CBS 708.71 / DSM 1257 / FGSC 987).